The following is a 271-amino-acid chain: Homeobox protein pal-1 (271 aa).

Disordered stretches follow at residues 1–25 (MSVD…TNVN), 100–135 (PPLS…ASSS), and 178–202 (GSAG…TNNV). 2 stretches are compositionally biased toward low complexity: residues 100 to 117 (PPLS…YPSP) and 125 to 135 (STSSGIGASSS). Polar residues predominate over residues 189–202 (DTKSLPTGPGTNNV). Positions 207–266 (ADKYRMVYSDYQRLELEKEFHTSAFITSDRKSQLSTMLSLTERQIKIWFQNRRAKDRRDK) form a DNA-binding region, homeobox.

The protein belongs to the Caudal homeobox family. As to quaternary structure, interacts with tir-1 and let-756.

The protein localises to the nucleus. The protein resides in the chromosome. It is found in the centromere. It localises to the kinetochore. Its function is as follows. Transcriptional activator. Interacts with promoter regions for tbx-8.9, tbx-9, elt-1, hnd-1, scrt-1, and vab-7 genes. Binds the sequence ATTTATGAC. Binds to the enhancer region of the hlh-1 gene promoter during embryonic body wall muscle development. Activates the gene for mab-5 in embryo development. Necessary for vab-7 expression in C blastomeres in the posterior of embryos. Required for posterior V6 neuroectoblast cell fate specification during postembryonic neurogenesis (patterning) which generates the characteristic ray lineage during male tail development. Binds to ced-3 promoter and activated expression which is crucial for tail-spike cell death. Has a role in E cell specification in endoderm development and body wall muscle development. In Caenorhabditis briggsae, this protein is Homeobox protein pal-1.